The chain runs to 372 residues: sn-glycerol-3-phosphate import ATP-binding protein UgpC (372 aa).

One can recognise an ABC transporter domain in the interval Leu2–Ile233. ATP is bound at residue Gly35 to Ser42.

The protein belongs to the ABC transporter superfamily. sn-glycerol-3-phosphate importer (TC 3.A.1.1.3) family. The complex is composed of two ATP-binding proteins (UgpC), two transmembrane proteins (UgpA and UgpE) and a solute-binding protein (UgpB).

It is found in the cell inner membrane. The catalysed reaction is sn-glycerol 3-phosphate(out) + ATP + H2O = sn-glycerol 3-phosphate(in) + ADP + phosphate + H(+). Functionally, part of the ABC transporter complex UgpBAEC involved in sn-glycerol-3-phosphate (G3P) import. Responsible for energy coupling to the transport system. This chain is sn-glycerol-3-phosphate import ATP-binding protein UgpC, found in Vibrio vulnificus (strain YJ016).